Here is a 127-residue protein sequence, read N- to C-terminus: Large ribosomal subunit protein bL17 (127 aa).

It belongs to the bacterial ribosomal protein bL17 family. Part of the 50S ribosomal subunit. Contacts protein L32.

The chain is Large ribosomal subunit protein bL17 from Xanthomonas euvesicatoria pv. vesicatoria (strain 85-10) (Xanthomonas campestris pv. vesicatoria).